The following is a 143-amino-acid chain: 3-hydroxyacyl-[acyl-carrier-protein] dehydratase FabZ (143 aa).

The active site involves H48.

The protein belongs to the thioester dehydratase family. FabZ subfamily.

The protein localises to the cytoplasm. The catalysed reaction is a (3R)-hydroxyacyl-[ACP] = a (2E)-enoyl-[ACP] + H2O. Functionally, involved in unsaturated fatty acids biosynthesis. Catalyzes the dehydration of short chain beta-hydroxyacyl-ACPs and long chain saturated and unsaturated beta-hydroxyacyl-ACPs. This is 3-hydroxyacyl-[acyl-carrier-protein] dehydratase FabZ from Roseiflexus castenholzii (strain DSM 13941 / HLO8).